A 208-amino-acid polypeptide reads, in one-letter code: Putative archaetidylserine decarboxylase proenzyme (208 aa).

S172 (schiff-base intermediate with substrate; via pyruvic acid) is an active-site residue. Residue S172 is modified to Pyruvic acid (Ser); by autocatalysis.

Belongs to the phosphatidylserine decarboxylase family. PSD-A subfamily. In terms of assembly, heterodimer of a large membrane-associated beta subunit and a small pyruvoyl-containing alpha subunit. Pyruvate is required as a cofactor. Post-translationally, is synthesized initially as an inactive proenzyme. Formation of the active enzyme involves a self-maturation process in which the active site pyruvoyl group is generated from an internal serine residue via an autocatalytic post-translational modification. Two non-identical subunits are generated from the proenzyme in this reaction, and the pyruvate is formed at the N-terminus of the alpha chain, which is derived from the carboxyl end of the proenzyme. The post-translation cleavage follows an unusual pathway, termed non-hydrolytic serinolysis, in which the side chain hydroxyl group of the serine supplies its oxygen atom to form the C-terminus of the beta chain, while the remainder of the serine residue undergoes an oxidative deamination to produce ammonia and the pyruvoyl prosthetic group on the alpha chain.

It localises to the cell membrane. The catalysed reaction is archaetidylserine + H(+) = archaetidylethanolamine + CO2. Its function is as follows. Catalyzes the formation of archaetidylethanolamine (PtdEtn) from archaetidylserine (PtdSer). In Methanosarcina acetivorans (strain ATCC 35395 / DSM 2834 / JCM 12185 / C2A), this protein is Putative archaetidylserine decarboxylase proenzyme.